Here is a 142-residue protein sequence, read N- to C-terminus: Protein-export protein SecB (142 aa).

It belongs to the SecB family. In terms of assembly, homotetramer, a dimer of dimers. One homotetramer interacts with 1 SecA dimer.

The protein resides in the cytoplasm. In terms of biological role, one of the proteins required for the normal export of preproteins out of the cell cytoplasm. It is a molecular chaperone that binds to a subset of precursor proteins, maintaining them in a translocation-competent state. It also specifically binds to its receptor SecA. This Buchnera aphidicola subsp. Acyrthosiphon pisum (strain 5A) protein is Protein-export protein SecB.